Here is a 342-residue protein sequence, read N- to C-terminus: Ribosomal RNA small subunit methyltransferase C (342 aa).

The protein belongs to the methyltransferase superfamily. RsmC family. In terms of assembly, monomer.

The protein localises to the cytoplasm. It carries out the reaction guanosine(1207) in 16S rRNA + S-adenosyl-L-methionine = N(2)-methylguanosine(1207) in 16S rRNA + S-adenosyl-L-homocysteine + H(+). Its function is as follows. Specifically methylates the guanine in position 1207 of 16S rRNA in the 30S particle. The polypeptide is Ribosomal RNA small subunit methyltransferase C (Shewanella oneidensis (strain ATCC 700550 / JCM 31522 / CIP 106686 / LMG 19005 / NCIMB 14063 / MR-1)).